We begin with the raw amino-acid sequence, 874 residues long: Alanine--tRNA ligase (874 aa).

Residues His-563, His-567, Cys-665, and His-669 each contribute to the Zn(2+) site.

Belongs to the class-II aminoacyl-tRNA synthetase family. Zn(2+) is required as a cofactor.

It localises to the cytoplasm. It catalyses the reaction tRNA(Ala) + L-alanine + ATP = L-alanyl-tRNA(Ala) + AMP + diphosphate. Functionally, catalyzes the attachment of alanine to tRNA(Ala) in a two-step reaction: alanine is first activated by ATP to form Ala-AMP and then transferred to the acceptor end of tRNA(Ala). Also edits incorrectly charged Ser-tRNA(Ala) and Gly-tRNA(Ala) via its editing domain. The sequence is that of Alanine--tRNA ligase from Histophilus somni (strain 2336) (Haemophilus somnus).